The primary structure comprises 311 residues: Peptide methionine sulfoxide reductase MsrA/MsrB (311 aa).

The segment at 1 to 155 (MAEIYLAGGC…PGGYCHINVN (155 aa)) is peptide methionine sulfoxide reductase A. Residue cysteine 10 is part of the active site. One can recognise a MsrB domain in the interval 172–295 (DAELKEQLTQ…NSAALRFIPK (124 aa)). Cysteine 284 functions as the Nucleophile in the catalytic mechanism.

The protein in the N-terminal section; belongs to the MsrA Met sulfoxide reductase family. This sequence in the C-terminal section; belongs to the MsrB Met sulfoxide reductase family.

It catalyses the reaction L-methionyl-[protein] + [thioredoxin]-disulfide + H2O = L-methionyl-(S)-S-oxide-[protein] + [thioredoxin]-dithiol. The enzyme catalyses [thioredoxin]-disulfide + L-methionine + H2O = L-methionine (S)-S-oxide + [thioredoxin]-dithiol. The catalysed reaction is L-methionyl-[protein] + [thioredoxin]-disulfide + H2O = L-methionyl-(R)-S-oxide-[protein] + [thioredoxin]-dithiol. Its function is as follows. Has an important function as a repair enzyme for proteins that have been inactivated by oxidation. Catalyzes the reversible oxidation-reduction of methionine sulfoxide in proteins to methionine. Involved in protection against oxidative stress when the bacterium enters the host bloodstream and required for maximal growth under aerobic and anaerobic conditions. In Streptococcus gordonii (strain Challis / ATCC 35105 / BCRC 15272 / CH1 / DL1 / V288), this protein is Peptide methionine sulfoxide reductase MsrA/MsrB (msrAB).